We begin with the raw amino-acid sequence, 467 residues long: NADH-quinone oxidoreductase subunit H (467 aa).

9 helical membrane-spanning segments follow: residues 18-38 (WWLVVIKAVFCFAFLMVTVLF), 88-108 (AVYVLAPIVAAIPAFMAIAVI), 131-151 (LPIAMLFILAVASVGIYGIVL), 172-192 (MISYEIAMGAAFASVFLYSGS), 206-226 (WYIVLLPVSFILYIVTMVGET), 256-276 (FMLAEYVNMVTVSAVATTLFL), 296-316 (WWPLLWFVVKVQLLLFFFIWL), 328-348 (LMKLGWKVLIPVSLVWLMLVA), and 363-383 (IALYIGGGVLVLLLLSFLVDM). The segment at 389 to 467 (GKAADQPAET…PTDGKEASDG (79 aa)) is disordered. The span at 418 to 430 (PVPPMPGQQVPPV) shows a compositional bias: pro residues.

It belongs to the complex I subunit 1 family. In terms of assembly, NDH-1 is composed of 14 different subunits. Subunits NuoA, H, J, K, L, M, N constitute the membrane sector of the complex.

It localises to the cell membrane. The catalysed reaction is a quinone + NADH + 5 H(+)(in) = a quinol + NAD(+) + 4 H(+)(out). Functionally, NDH-1 shuttles electrons from NADH, via FMN and iron-sulfur (Fe-S) centers, to quinones in the respiratory chain. The immediate electron acceptor for the enzyme in this species is believed to be ubiquinone. Couples the redox reaction to proton translocation (for every two electrons transferred, four hydrogen ions are translocated across the cytoplasmic membrane), and thus conserves the redox energy in a proton gradient. This subunit may bind ubiquinone. This chain is NADH-quinone oxidoreductase subunit H, found in Streptomyces coelicolor (strain ATCC BAA-471 / A3(2) / M145).